The sequence spans 121 residues: Large ribosomal subunit protein bL19 (121 aa).

It belongs to the bacterial ribosomal protein bL19 family.

Functionally, this protein is located at the 30S-50S ribosomal subunit interface and may play a role in the structure and function of the aminoacyl-tRNA binding site. In Chlamydia pneumoniae (Chlamydophila pneumoniae), this protein is Large ribosomal subunit protein bL19 (rplS).